The chain runs to 602 residues: MEDLEEGTGEGCSGWFDREAICSDGSSDEEPNESFESIADMFDDGTQTQGNSLELFHTQEKEETRTQIQALKRKYIPSPEAGGDLSPRLRAISITPKKKKPSRRLFETPEDSGNGSLGNETTDTSSGFQVVGDSAVDVCDAGRLLNLNLLQSHNRVARLLAVFKEAYGVSYKELTREYKSDKTCNPDWVIALYSLSEPILNAARTTLQGICEYVFMQSRPTAAATVALLTVRFKCSKSRETVRKQMCGMFHSDPLLCLCDPPKVQSVPAALYWYKSSMYSGTFTHGEAPEWIKRQTMITCAMEETKFDLSEMVQWAYDNNYEDESQIAFEYARTATESPNANAWLASNAQAKHVRDCATMVRHYKRAEMKAMSMSQWVWKCCREEPEEGTWTPISLYLASEGVEVIRFLSAMKSWLRGIPKKNCLVFYGPPNTGKSLFTMSLIKFLRGRVISFANSKSHFWMQPLAEAKVVLLDDATRATWDYVDTYMRNAMDGNPLSIDCKYRTPVQVKCPPMLVTTNEDVHLNDRWRYLHSRIQVFHLKEPMPIDTAGNPEYSFSNRHWKAFFEKLQKPLDLSEDEGDPKDNGEHTQPFSCCARGTDVHV.

Residues 1 to 66 (MEDLEEGTGE…HTQEKEETRT (66 aa)) are disordered. Residues 72–74 (KRK) carry the Nuclear localization signal motif. Residues Ser-78 and Ser-86 each carry the phosphoserine; by host modification. Residues 78–126 (SPEAGGDLSPRLRAISITPKKKKPSRRLFETPEDSGNGSLGNETTDTSS) are disordered. A Nuclear export signal motif is present at residues 85 to 94 (LSPRLRAISI). Over residues 111-126 (DSGNGSLGNETTDTSS) the composition is skewed to polar residues. The DNA-binding region stretch occupies residues 138–304 (VCDAGRLLNL…QTMITCAMEE (167 aa)). Residues 403 to 553 (VEVIRFLSAM…MPIDTAGNPE (151 aa)) form the SF3 helicase domain. An ATP-binding site is contributed by 429–436 (GPPNTGKS). Lys-510 participates in a covalent cross-link: Glycyl lysine isopeptide (Lys-Gly) (interchain with G-Cter in SUMO). Positions 573 to 602 (DLSEDEGDPKDNGEHTQPFSCCARGTDVHV) are disordered.

This sequence belongs to the papillomaviridae E1 protein family. In terms of assembly, can form hexamers. Interacts with E2 protein; this interaction increases E1 DNA binding specificity. Interacts with host DNA polymerase subunit POLA2. Interacts with host single stranded DNA-binding protein RPA1. Interacts with host TOP1; this interaction stimulates the enzymatic activity of TOP1. In terms of processing, phosphorylated. Sumoylated.

It is found in the host nucleus. It catalyses the reaction Couples ATP hydrolysis with the unwinding of duplex DNA by translocating in the 3'-5' direction.. The catalysed reaction is ATP + H2O = ADP + phosphate + H(+). Its function is as follows. ATP-dependent DNA 3'-5' helicase required for initiation of viral DNA replication. It forms a complex with the viral E2 protein. The E1-E2 complex binds to the replication origin which contains binding sites for both proteins. During the initial step, a dimer of E1 interacts with a dimer of protein E2 leading to a complex that binds the viral origin of replication with high specificity. Then, a second dimer of E1 displaces the E2 dimer in an ATP-dependent manner to form the E1 tetramer. Following this, two E1 monomers are added to each half of the site, which results in the formation of two E1 trimers on the viral ori. Subsequently, two hexamers will be created. The double hexamer acts as a bi-directional helicase machinery and unwinds the viral DNA and then recruits the host DNA polymerase to start replication. The protein is Replication protein E1 of Mastomys natalensis papillomavirus (isolate African multimammate rat) (MnPV).